A 345-amino-acid chain; its full sequence is 2-oxoglutarate-dependent ethylene/succinate-forming enzyme (345 aa).

In terms of domain architecture, Fe2OG dioxygenase spans 167–288 (GWHHMRVLRF…RFAMAYFHEP (122 aa)). Fe cation contacts are provided by His-191 and His-270.

The protein belongs to the iron/ascorbate-dependent oxidoreductase family. In terms of assembly, monomer. Fe(2+) serves as cofactor.

It catalyses the reaction 2-oxoglutarate + O2 + 2 H(+) = ethene + 3 CO2 + H2O. The catalysed reaction is L-arginine + 2-oxoglutarate + O2 = guanidine + L-glutamate 5-semialdehyde + succinate + CO2. Its pathway is alkene biosynthesis; ethylene biosynthesis via 2-oxoglutarate. In terms of biological role, simultaneously catalyzes two reactions, namely formation of ethylene and of succinate from 2-oxoglutarate. The sequence is that of 2-oxoglutarate-dependent ethylene/succinate-forming enzyme (efe) from Ralstonia nicotianae (strain ATCC BAA-1114 / GMI1000) (Ralstonia solanacearum).